The following is a 322-amino-acid chain: Agmatinase (322 aa).

His-136, Asp-160, His-162, Asp-164, Asp-243, and Asp-245 together coordinate Mn(2+).

It belongs to the arginase family. Agmatinase subfamily. Requires Mn(2+) as cofactor.

The enzyme catalyses agmatine + H2O = urea + putrescine. It functions in the pathway amine and polyamine biosynthesis; putrescine biosynthesis via agmatine pathway; putrescine from agmatine: step 1/1. Functionally, catalyzes the formation of putrescine from agmatine. This Chromobacterium violaceum (strain ATCC 12472 / DSM 30191 / JCM 1249 / CCUG 213 / NBRC 12614 / NCIMB 9131 / NCTC 9757 / MK) protein is Agmatinase.